A 265-amino-acid chain; its full sequence is tRNA pseudouridine synthase A (265 aa).

Aspartate 53 (nucleophile) is an active-site residue. Tyrosine 111 is a substrate binding site.

It belongs to the tRNA pseudouridine synthase TruA family. Homodimer.

The enzyme catalyses uridine(38/39/40) in tRNA = pseudouridine(38/39/40) in tRNA. In terms of biological role, formation of pseudouridine at positions 38, 39 and 40 in the anticodon stem and loop of transfer RNAs. This is tRNA pseudouridine synthase A from Acinetobacter baumannii (strain SDF).